Reading from the N-terminus, the 348-residue chain is MKNLLGSSVKDLENVALEYGQAAFRGRQIHNWIYNYRNKKKSIDQIEALPLDFRKKLKDDGFKLSELSVQERNLANDGTLKLLLSANDNESIECVGIPTEKRLTACLSSQVGCPMDCKFCATGKEGLKRSLKASEILDQILFIENEMNRKVTNIVFMGMGEPLLNIDDLLVSIRSINKDFQISQRKITVSTVAVPKMINKLSAKSFQILGNCQFTLAISLHASNQKIRETIIPSAKNYEIENIIEDCKQYVRDTGRRVSFEYLMLSGVNDKLEHANELSNLLRGFQCHVNLIQYNQIDEVEFQRTSLKSLQSFQSRLSHNGIAVSLRKSRGLDKNAACGQLRQNANHQ.

The active-site Proton acceptor is E93. The Radical SAM core domain maps to 99–333; it reads TEKRLTACLS…VSLRKSRGLD (235 aa). C106 and C338 are joined by a disulfide. Residues C113, C117, and C120 each coordinate [4Fe-4S] cluster. Residues 160–161, S190, 219–221, and N295 each bind S-adenosyl-L-methionine; these read GE and SLH. C338 serves as the catalytic S-methylcysteine intermediate.

Belongs to the radical SAM superfamily. RlmN family. The cofactor is [4Fe-4S] cluster.

The protein localises to the cytoplasm. It catalyses the reaction adenosine(2503) in 23S rRNA + 2 reduced [2Fe-2S]-[ferredoxin] + 2 S-adenosyl-L-methionine = 2-methyladenosine(2503) in 23S rRNA + 5'-deoxyadenosine + L-methionine + 2 oxidized [2Fe-2S]-[ferredoxin] + S-adenosyl-L-homocysteine. It carries out the reaction adenosine(37) in tRNA + 2 reduced [2Fe-2S]-[ferredoxin] + 2 S-adenosyl-L-methionine = 2-methyladenosine(37) in tRNA + 5'-deoxyadenosine + L-methionine + 2 oxidized [2Fe-2S]-[ferredoxin] + S-adenosyl-L-homocysteine. Its function is as follows. Specifically methylates position 2 of adenine 2503 in 23S rRNA and position 2 of adenine 37 in tRNAs. This is Probable dual-specificity RNA methyltransferase RlmN from Prochlorococcus marinus (strain MIT 9215).